The chain runs to 285 residues: Shikimate dehydrogenase (NADP(+)) (285 aa).

Shikimate-binding positions include 20 to 22 (SIS) and Ser67. Catalysis depends on Lys71, which acts as the Proton acceptor. Asn92 and Asp107 together coordinate shikimate. NADP(+)-binding positions include 129–133 (GAGGA) and Ile227. Tyr229 serves as a coordination point for shikimate. Gly250 is an NADP(+) binding site.

This sequence belongs to the shikimate dehydrogenase family. Homodimer.

It catalyses the reaction shikimate + NADP(+) = 3-dehydroshikimate + NADPH + H(+). The protein operates within metabolic intermediate biosynthesis; chorismate biosynthesis; chorismate from D-erythrose 4-phosphate and phosphoenolpyruvate: step 4/7. Involved in the biosynthesis of the chorismate, which leads to the biosynthesis of aromatic amino acids. Catalyzes the reversible NADPH linked reduction of 3-dehydroshikimate (DHSA) to yield shikimate (SA). The polypeptide is Shikimate dehydrogenase (NADP(+)) (Streptococcus thermophilus (strain ATCC BAA-491 / LMD-9)).